A 112-amino-acid chain; its full sequence is MMNLTDIIDNCLENDTGDHRALDSETAQFIRITLMNDTLVNSIHPSVYDAIIVTKYPVELHKKMTGAVFIDKKNRFKDGQNIISSVIKSITKLRHEIYRVETAKSAYLVIMK.

This is an uncharacterized protein from Escherichia coli (Bacteriophage T4).